The chain runs to 295 residues: Phosphatidylglycerol--prolipoprotein diacylglyceryl transferase (295 aa).

The next 4 helical transmembrane spans lie at 28–48 (WYAL…VLAT), 69–89 (LLTW…VLFY), 101–121 (ILMV…VVIA), and 131–151 (IPKL…LLLG). Arginine 152 lines the a 1,2-diacyl-sn-glycero-3-phospho-(1'-sn-glycerol) pocket. 3 consecutive transmembrane segments (helical) span residues 195 to 215 (QLYE…WLVW), 224 to 244 (GLIT…VEFF), and 268 to 288 (GLTM…WFVL).

The protein belongs to the Lgt family.

It localises to the cell inner membrane. The enzyme catalyses L-cysteinyl-[prolipoprotein] + a 1,2-diacyl-sn-glycero-3-phospho-(1'-sn-glycerol) = an S-1,2-diacyl-sn-glyceryl-L-cysteinyl-[prolipoprotein] + sn-glycerol 1-phosphate + H(+). The protein operates within protein modification; lipoprotein biosynthesis (diacylglyceryl transfer). Functionally, catalyzes the transfer of the diacylglyceryl group from phosphatidylglycerol to the sulfhydryl group of the N-terminal cysteine of a prolipoprotein, the first step in the formation of mature lipoproteins. The chain is Phosphatidylglycerol--prolipoprotein diacylglyceryl transferase from Ruegeria pomeroyi (strain ATCC 700808 / DSM 15171 / DSS-3) (Silicibacter pomeroyi).